Consider the following 182-residue polypeptide: MDIDPYKEFGATVELLSFLPADFFPSVRDLLDTASALYREALESSDHCSPHHTALRQTVLCWGELMSLASWVGTNLEDPAARELVVSYVNDNMGLKVRQLLWFHISCLTFGRETVLEYLVSFWVWIRTPPAYRPPNAPILSTLPETTVVRRRRPSGRRTPSPRRRRSQSPRRRRSQSPASSC.

A disordered region spans residues 136-182; it reads NAPILSTLPETTVVRRRRPSGRRTPSPRRRRSQSPRRRRSQSPASSC. Residues 149–175 are compositionally biased toward basic residues; that stretch reads VRRRRPSGRRTPSPRRRRSQSPRRRRS. A Bipartite nuclear localization signal motif is present at residues 157–174; that stretch reads RRTPSPRRRRSQSPRRRR. Phosphoserine; by host occurs at positions 161 and 169. 2 tandem repeats follow at residues 161 to 168 and 169 to 176. Positions 161–176 are 2 X 8 AA repeats of S-P-R-R-R-[PR]-S-Q; it reads SPRRRRSQSPRRRRSQ. The RNA binding stretch occupies residues 176–182; it reads QSPASSC.

Belongs to the orthohepadnavirus core antigen family. In terms of assembly, homodimerizes, then multimerizes. Interacts with cytosol exposed regions of viral L glycoprotein present in the reticulum-to-Golgi compartment. Interacts with human FLNB. Phosphorylated form interacts with host importin alpha; this interaction depends on the exposure of the NLS, which itself depends upon genome maturation and/or phosphorylation of the capsid protein. Interacts with host NUP153. In terms of processing, phosphorylated by host SRPK1, SRPK2, and maybe protein kinase C or GAPDH. Phosphorylation is critical for pregenomic RNA packaging. Protein kinase C phosphorylation is stimulated by HBx protein and may play a role in transport of the viral genome to the nucleus at the late step during the viral replication cycle.

Its subcellular location is the virion. It localises to the host cytoplasm. Self assembles to form an icosahedral capsid. Most capsids appear to be large particles with an icosahedral symmetry of T=4 and consist of 240 copies of capsid protein, though a fraction forms smaller T=3 particles consisting of 180 capsid proteins. Entering capsids are transported along microtubules to the nucleus. Phosphorylation of the capsid is thought to induce exposure of nuclear localization signal in the C-terminal portion of the capsid protein that allows binding to the nuclear pore complex via the importin (karyopherin-) alpha and beta. Capsids are imported in intact form through the nuclear pore into the nuclear basket, where it probably binds NUP153. Only capsids that contain the mature viral genome can release the viral DNA and capsid protein into the nucleoplasm. Immature capsids get stuck in the basket. Capsids encapsulate the pre-genomic RNA and the P protein. Pre-genomic RNA is reverse-transcribed into DNA while the capsid is still in the cytoplasm. The capsid can then either be directed to the nucleus, providing more genomes for transcription, or bud through the endoplasmic reticulum to provide new virions. This chain is Capsid protein, found in Woolly monkey hepatitis B virus (isolate Louisville) (WMHBV).